The chain runs to 390 residues: Magnesium-protoporphyrin IX monomethyl ester [oxidative] cyclase (390 aa).

Belongs to the AcsF family. Requires Fe cation as cofactor.

The catalysed reaction is Mg-protoporphyrin IX 13-monomethyl ester + 3 NADPH + 3 O2 + 2 H(+) = 3,8-divinyl protochlorophyllide a + 3 NADP(+) + 5 H2O. It participates in porphyrin-containing compound metabolism; chlorophyll biosynthesis (light-independent). Functionally, catalyzes the formation of the isocyclic ring in chlorophyll biosynthesis. Mediates the cyclase reaction, which results in the formation of divinylprotochlorophyllide (Pchlide) characteristic of all chlorophylls from magnesium-protoporphyrin IX 13-monomethyl ester (MgPMME). This chain is Magnesium-protoporphyrin IX monomethyl ester [oxidative] cyclase, found in Prochlorococcus marinus (strain MIT 9215).